The chain runs to 295 residues: Hepatic leukemia factor (295 aa).

Basic and acidic residues predominate over residues 37–52 (EDAFSKDKDKEKKLDD). Disordered regions lie at residues 37-70 (EDAFSKDKDKEKKLDDESNSPTVPQSAFLGPTLW) and 93-167 (SENG…IDPD). The bZIP domain maps to 225–288 (DDKYWARRRK…GKCKNILAKY (64 aa)). The tract at residues 227 to 247 (KYWARRRKNNMAAKRSRDARR) is basic motif. The tract at residues 248–255 (LKENQIAI) is leucine-zipper.

Belongs to the bZIP family. PAR subfamily. In terms of assembly, binds DNA specifically as homodimer or heterodimer with other PAR factors. Highly expressed in liver; lower levels in lung and kidney.

The protein localises to the nucleus. In Homo sapiens (Human), this protein is Hepatic leukemia factor (HLF).